Consider the following 384-residue polypeptide: S-adenosylmethionine synthase (384 aa).

H15 provides a ligand contact to ATP. Mg(2+) is bound at residue D17. K(+) is bound at residue E43. The L-methionine site is built by E56 and Q99. The segment at 99–109 (QSADINQGVDR) is flexible loop. ATP contacts are provided by residues 164–166 (DAK), 230–231 (RF), D239, 245–246 (RK), A262, and K266. Residue D239 coordinates L-methionine. K270 is a binding site for L-methionine.

It belongs to the AdoMet synthase family. As to quaternary structure, homotetramer; dimer of dimers. Mg(2+) serves as cofactor. It depends on K(+) as a cofactor.

It localises to the cytoplasm. It catalyses the reaction L-methionine + ATP + H2O = S-adenosyl-L-methionine + phosphate + diphosphate. It participates in amino-acid biosynthesis; S-adenosyl-L-methionine biosynthesis; S-adenosyl-L-methionine from L-methionine: step 1/1. Its function is as follows. Catalyzes the formation of S-adenosylmethionine (AdoMet) from methionine and ATP. The overall synthetic reaction is composed of two sequential steps, AdoMet formation and the subsequent tripolyphosphate hydrolysis which occurs prior to release of AdoMet from the enzyme. The protein is S-adenosylmethionine synthase of Haemophilus influenzae (strain ATCC 51907 / DSM 11121 / KW20 / Rd).